The chain runs to 496 residues: MHAKSLTELRAALAAKECSAVELAQLYLKRIDAARDLNAFVHVDADLTLAQAKAADAELARGAGGALTGLPIAHKDVFVTRGWRSTAGSKMLANYESPFDATVVARLQAAGMVTLGKTNMDEFAMGSSNENSAFGAVKNPWDTNAVPGGSSGGSSAAVAARLAPAATGTDTGGSIRQPASFAGVTGIKPTYGRVSRYGMIAFASSLDQGGPMAQSASDCALLLNAMSGFDERDSTSLEREDEDFTRHLGQPWAAGNDAGKPLAGLRIGLPNEYFGDGLADDVRASIDAALKQYEALGATLVPVSLPKTELSIPVYYVIAPAEASSNLSRFDGVRFGHRAAQYGDLLDMYKKSRAEGFGPEVKRRILVGAYVLSHGYYDAYYLQAQKIRRIIAQDFQEAFKSCDVIMGPASPTVAWDLGSKGDDPVQMYLADIYTLSVSLAGLPGMSVPCGFGASANAKRPVGLQIIGNYFNEARMLQVADAFQRATDWHKQVPAGV.

Active-site charge relay system residues include Lys-75 and Ser-150. Residue Ser-174 is the Acyl-ester intermediate of the active site.

This sequence belongs to the amidase family. GatA subfamily. In terms of assembly, heterotrimer of A, B and C subunits.

It catalyses the reaction L-glutamyl-tRNA(Gln) + L-glutamine + ATP + H2O = L-glutaminyl-tRNA(Gln) + L-glutamate + ADP + phosphate + H(+). Its function is as follows. Allows the formation of correctly charged Gln-tRNA(Gln) through the transamidation of misacylated Glu-tRNA(Gln) in organisms which lack glutaminyl-tRNA synthetase. The reaction takes place in the presence of glutamine and ATP through an activated gamma-phospho-Glu-tRNA(Gln). The polypeptide is Glutamyl-tRNA(Gln) amidotransferase subunit A (Burkholderia ambifaria (strain ATCC BAA-244 / DSM 16087 / CCUG 44356 / LMG 19182 / AMMD) (Burkholderia cepacia (strain AMMD))).